Consider the following 349-residue polypeptide: Isopentenyl-diphosphate delta-isomerase (349 aa).

9–10 (RK) is a binding site for substrate. FMN-binding positions include 65-67 (AMT), serine 95, and asparagine 124. 95-97 (STH) is a binding site for substrate. Glutamine 154 contributes to the substrate binding site. Glutamate 155 is a binding site for Mg(2+). FMN is bound by residues lysine 186, serine 211, threonine 216, 262–264 (GLR), and 283–284 (SR).

Belongs to the IPP isomerase type 2 family. In terms of assembly, homooctamer. Dimer of tetramers. It depends on FMN as a cofactor. NADPH is required as a cofactor. Mg(2+) serves as cofactor.

The protein resides in the cytoplasm. It carries out the reaction isopentenyl diphosphate = dimethylallyl diphosphate. Functionally, involved in the biosynthesis of isoprenoids. Catalyzes the 1,3-allylic rearrangement of the homoallylic substrate isopentenyl (IPP) to its allylic isomer, dimethylallyl diphosphate (DMAPP). In Staphylococcus aureus (strain MSSA476), this protein is Isopentenyl-diphosphate delta-isomerase.